We begin with the raw amino-acid sequence, 162 residues long: Cytochrome c-type biogenesis protein CcmE (162 aa).

The Cytoplasmic segment spans residues 1-8; that stretch reads MNPVRKKR. The chain crosses the membrane as a helical; Signal-anchor for type II membrane protein span at residues 9-29; it reads LIIVLAIVAGVGAAVGLALSA. Topologically, residues 30 to 162 are periplasmic; the sequence is LQQNINLFYT…GETSYNQEGK (133 aa). 2 residues coordinate heme: His-124 and Tyr-128. Residues 139–148 are compositionally biased toward basic and acidic residues; the sequence is DSGQLKHYEN. The disordered stretch occupies residues 139–162; sequence DSGQLKHYENGKAAGETSYNQEGK.

This sequence belongs to the CcmE/CycJ family.

The protein localises to the cell inner membrane. In terms of biological role, heme chaperone required for the biogenesis of c-type cytochromes. Transiently binds heme delivered by CcmC and transfers the heme to apo-cytochromes in a process facilitated by CcmF and CcmH. The protein is Cytochrome c-type biogenesis protein CcmE of Pseudomonas aeruginosa (strain ATCC 15692 / DSM 22644 / CIP 104116 / JCM 14847 / LMG 12228 / 1C / PRS 101 / PAO1).